The following is a 439-amino-acid chain: Glutamate-1-semialdehyde 2,1-aminomutase (439 aa).

An N6-(pyridoxal phosphate)lysine modification is found at lysine 270.

This sequence belongs to the class-III pyridoxal-phosphate-dependent aminotransferase family. HemL subfamily. In terms of assembly, homodimer. Pyridoxal 5'-phosphate serves as cofactor.

The protein resides in the cytoplasm. The enzyme catalyses (S)-4-amino-5-oxopentanoate = 5-aminolevulinate. Its pathway is porphyrin-containing compound metabolism; protoporphyrin-IX biosynthesis; 5-aminolevulinate from L-glutamyl-tRNA(Glu): step 2/2. The polypeptide is Glutamate-1-semialdehyde 2,1-aminomutase (Kocuria rhizophila (strain ATCC 9341 / DSM 348 / NBRC 103217 / DC2201)).